A 221-amino-acid polypeptide reads, in one-letter code: Protein GrpE (221 aa).

The segment at methionine 1–alanine 43 is disordered. The segment covering arginine 8 to asparagine 20 has biased composition (basic and acidic residues).

It belongs to the GrpE family. As to quaternary structure, homodimer.

It is found in the cytoplasm. In terms of biological role, participates actively in the response to hyperosmotic and heat shock by preventing the aggregation of stress-denatured proteins, in association with DnaK and GrpE. It is the nucleotide exchange factor for DnaK and may function as a thermosensor. Unfolded proteins bind initially to DnaJ; upon interaction with the DnaJ-bound protein, DnaK hydrolyzes its bound ATP, resulting in the formation of a stable complex. GrpE releases ADP from DnaK; ATP binding to DnaK triggers the release of the substrate protein, thus completing the reaction cycle. Several rounds of ATP-dependent interactions between DnaJ, DnaK and GrpE are required for fully efficient folding. This chain is Protein GrpE, found in Deinococcus radiodurans (strain ATCC 13939 / DSM 20539 / JCM 16871 / CCUG 27074 / LMG 4051 / NBRC 15346 / NCIMB 9279 / VKM B-1422 / R1).